We begin with the raw amino-acid sequence, 398 residues long: Thyrotropin-releasing hormone receptor (398 aa).

Residues 1–28 (MENETGSELNQTQLQPRAVVALEYQVVT) are Extracellular-facing. Asn3 and Asn10 each carry an N-linked (GlcNAc...) asparagine glycan. Residues 29-51 (ILLVLIICGLGIVGNIMVVLVVM) form a helical membrane-spanning segment. The Cytoplasmic portion of the chain corresponds to 52–61 (RTKHMRTPTN). The helical transmembrane segment at 62–83 (CYLVSLAVADLMVLVAAGLPNI) threads the bilayer. Topologically, residues 84 to 99 (TDSIYGSWVYGYVGCL) are extracellular. Cys98 and Cys179 are joined by a disulfide. The chain crosses the membrane as a helical span at residues 100 to 121 (CITYLQYLGINASSCSITAFTI). Residues 122–144 (ERYIAICHPIKAQFLCTFSRAKK) are Cytoplasmic-facing. The chain crosses the membrane as a helical span at residues 145–168 (IIIFVWAFTSIYCMLWFFLLDLNI). The Extracellular portion of the chain corresponds to 169 to 193 (STYKDAIVVSCGYKISRNYYSPIYL). A helical membrane pass occupies residues 194 to 215 (MDFGVFYVVPMILATVLYGFIA). Residues 216-266 (RILFLSPIPSDPKENSNTWKNDSTHQNKNLNSKTSNRYFNSTVSSRKQVTK) lie on the Cytoplasmic side of the membrane. The chain crosses the membrane as a helical span at residues 267–288 (MLAVVVILFALLWMPYRTLVVV). Residues 289–296 (NSFLSSPF) are Extracellular-facing. The helical transmembrane segment at 297 to 319 (QENWFLLFCRICIYLNSAINPVI) threads the bilayer. Topologically, residues 320–398 (YNLMSQKFRA…LASEVTFSQS (79 aa)) are cytoplasmic.

Belongs to the G-protein coupled receptor 1 family.

Its subcellular location is the cell membrane. Its function is as follows. Receptor for thyrotropin-releasing hormone (TRH). Upon ligand binding, this G-protein-coupled receptor triggers activation of the phosphatidylinositol (IP3)-calcium-protein kinase C (PKC) pathway. In Ovis aries (Sheep), this protein is Thyrotropin-releasing hormone receptor (TRHR).